Reading from the N-terminus, the 549-residue chain is MAPKRKPPARAAAAKLDPDGMFRGVSAFVVPHAVQSRRLEVWKQRLAQMGGRVQEKLAAKGGGGAVTHVLAADAKALLRELDAAWLHRFRGSVVSFEWLEECLKSGERLPEHKFAINYEEEFKPKKEGGAAGSGVLQSAKRSKISSDGPENRKETAGGNRESRDAIAHPNEDSDVVKGPSTCTSSQSASGDSKETIASQNAFKAEEASSGESSTYAPPDLNRNITEIFGKLINIYRALGDDRRSFSYYKAIPVIEKLPFKIESADQVKDLPAIGKSLKDHINEIVNTGKLSKLEHFENDEKVRTVSLFGEVWGVGPATALKLYDKGHRTLDDLQKDDSLTSAQRIGLKFFDDIKQRIPRHEVSEMEKLLQEVGTDILPGVIIVCGGSYRRGKSSCGDMDIIITHPDGESHVGFLPKFVQRLKGINFLREDLIFSIHSIEGTDCGVDTYFGLCTYPGRELRHRIDLKVYPRNRHAFGLLAWTGNDVLNRRLRILADSKGYILDDTGLYLATPGSGGKRGGRSDAIINCDTEKDVFDTLGFPWLEPHERNL.

Residues 17 to 116 (DPDGMFRGVS…ERLPEHKFAI (100 aa)) form the BRCT domain. Positions 126 to 197 (KEGGAAGSGV…ASGDSKETIA (72 aa)) are disordered. Residues 149–175 (PENRKETAGGNRESRDAIAHPNEDSDV) are compositionally biased toward basic and acidic residues. Residues 180–197 (STCTSSQSASGDSKETIA) are compositionally biased toward polar residues. Residues 233-247 (NIYRALGDDRRSFSY) form a DNA-binding region. His280 is a catalytic residue. A DNA-binding region spans residues 315-318 (GPAT). DCTP-binding positions include Arg356, 387–390 (SYRR), and 396–399 (GDMD). The tract at residues 390-399 (RGKSSCGDMD) is involved in primer binding. Asp397, Asp399, and Asp464 together coordinate Mn(2+). Residues 438 to 479 (IEGTDCGVDTYFGLCTYPGRELRHRIDLKVYPRNRHAFGLLA) are DNA-binding. A dCTP-binding site is contributed by Asn487.

The protein belongs to the DNA polymerase type-X family. As to quaternary structure, interacts with PCNA. The cofactor is Mn(2+). In terms of tissue distribution, expressed in proliferating tissues. Expressed in roots, root apex, young leaves, shoot apical meristem (SAM), flag leaves and panicles.

Its subcellular location is the nucleus. The enzyme catalyses DNA(n) + a 2'-deoxyribonucleoside 5'-triphosphate = DNA(n+1) + diphosphate. Repair polymerase involved in base excision repair (BER) and responsible for repair of lesions that give rise to abasic (AP) sites in DNA. Has both DNA polymerase and terminal transferase activities. Has a 5'-deoxyribose-5-phosphate lyase (dRP lyase) activity. The polypeptide is DNA polymerase lambda (Oryza sativa subsp. japonica (Rice)).